Here is a 501-residue protein sequence, read N- to C-terminus: Cyclin-dependent kinase 19 (501 aa).

Methionine 1 is modified (N-acetylmethionine). The Protein kinase domain occupies 21-335 (EYEGCKVGRG…SEQALQDPYF (315 aa)). ATP-binding positions include 27-35 (VGRGTYGHV) and lysine 52. Aspartate 151 functions as the Proton acceptor in the catalytic mechanism. The tract at residues 362 to 501 (DEPEEKGDKN…YHSSHQTHRY (140 aa)) is disordered. Residues 371–392 (NQPQQQNPHQQPAAPAQQTAAP) show a composition bias toward low complexity. A compositionally biased stretch (gly residues) spans 408–421 (TAGGATAGGGGAGA). At serine 449 the chain carries Phosphoserine. Residues 467–495 (YQSSVQGSSQSQSTLGYSSSQQSTQYHSS) are compositionally biased toward low complexity.

The protein belongs to the protein kinase superfamily. CMGC Ser/Thr protein kinase family. CDC2/CDKX subfamily.

The protein resides in the cytoplasm. It localises to the perinuclear region. The protein localises to the nucleus. The catalysed reaction is L-seryl-[protein] + ATP = O-phospho-L-seryl-[protein] + ADP + H(+). It catalyses the reaction L-threonyl-[protein] + ATP = O-phospho-L-threonyl-[protein] + ADP + H(+). This Mus musculus (Mouse) protein is Cyclin-dependent kinase 19 (Cdk19).